The primary structure comprises 304 residues: MSQSDADALPNVHVRAEVLVQALPHMQRYDEEIVVIKYGGHAMGDRAAAEDFAEDIVLLEQSGLKPVIVHGGGPQIGRMLDRLGIKSEFREGLRVTDEATVEVVEMVLAGSINKQIVGWISAEGGKAIGLCGKDGNMVQARRATRTVVDPDSNIERHVDLGLVGEPERVNRAVLDAVLKAELIPVLAPVAVGSDGQTYNVNADTFAGAIAGALRAKRLLLLTDVPGVLDKDKKLIPELSIEDCRRLIADGTITGGMIPKIETCIYAIEQGVEAVVILDGKVPHAVLLELFTDYGAGTLIRRSGA.

Substrate-binding positions include 72-73, R94, and N199; that span reads GG.

This sequence belongs to the acetylglutamate kinase family. ArgB subfamily.

It is found in the cytoplasm. It catalyses the reaction N-acetyl-L-glutamate + ATP = N-acetyl-L-glutamyl 5-phosphate + ADP. The protein operates within amino-acid biosynthesis; L-arginine biosynthesis; N(2)-acetyl-L-ornithine from L-glutamate: step 2/4. In terms of biological role, catalyzes the ATP-dependent phosphorylation of N-acetyl-L-glutamate. This is Acetylglutamate kinase from Methylobacterium nodulans (strain LMG 21967 / CNCM I-2342 / ORS 2060).